A 103-amino-acid chain; its full sequence is UPF0145 protein NT01CX_0170 (103 aa).

It belongs to the UPF0145 family.

The sequence is that of UPF0145 protein NT01CX_0170 from Clostridium novyi (strain NT).